We begin with the raw amino-acid sequence, 714 residues long: Transcription activator of gluconeogenesis UREG_00958 (714 aa).

Positions 1-71 are disordered; that stretch reads MTSNARNGPL…NAKDPLRPRR (71 aa). Over residues 38-62 the composition is skewed to polar residues; the sequence is ESQTQVENSSTKQPNGQTKPMSASN. The segment at residues 78-106 is a DNA-binding region (zn(2)-C6 fungal-type); sequence CFACQRAHLTCGDERPCQRCIKRGIQNSC. 3 disordered regions span residues 176–228, 274–312, and 539–567; these read SLSQ…NASG, GAGD…TAQP, and NTGG…VNPS. Residues 191-228 are compositionally biased toward polar residues; the sequence is FPSQSPVSPTFSITANSATSGNQNMPSSLPASNGNASG. Positions 545 to 555 are enriched in low complexity; it reads GSTSGTSSRGS.

The protein belongs to the ERT1/acuK family.

It localises to the nucleus. Functionally, transcription factor which regulates nonfermentable carbon utilization. Activator of gluconeogenetic genes. This chain is Transcription activator of gluconeogenesis UREG_00958, found in Uncinocarpus reesii (strain UAMH 1704).